Consider the following 1086-residue polypeptide: Selenocysteine insertion sequence-binding protein 2-like (1086 aa).

Disordered regions lie at residues 155–207 (GQAF…GPDS), 243–386 (AKGR…SESL), 615–657 (QEDA…SPMA), 880–904 (SDGLEPSEMEKAAPCTHSPPEKPSR), and 919–1086 (AAGS…PQST). Residues 193-206 (NVATQKETSATGPD) show a composition bias toward polar residues. Position 276 is a phosphoserine (serine 276). Polar residues-rich tracts occupy residues 294 to 303 (GTMNRLESSG) and 328 to 344 (QAFSRGGRQTEQRNNLQ). The segment covering 355 to 370 (SSERRQNLQKRQDNKH) has biased composition (basic and acidic residues). Positions 624–657 (SDASLSPASQNSPYCMTPVSQGSPASSGIGSPMA) are enriched in polar residues. The segment covering 922–931 (SITSAPSQGK) has biased composition (polar residues). The span at 933–943 (TGDKDELKPDD) shows a compositional bias: basic and acidic residues. Positions 947–957 (ASQQSTETGSL) are enriched in polar residues. Residues 981-994 (LEEEEDEEEEEEDY) are compositionally biased toward acidic residues. Polar residues predominate over residues 1004 to 1022 (QLNSRIESWVSETQRTMET). Acidic residues predominate over residues 1032–1046 (SEEDSAEQSGEEAAE).

Functionally, binds SECIS (Sec insertion sequence) elements present on selenocysteine (Sec) protein mRNAs, but does not promote Sec incorporation into selenoproteins. This is Selenocysteine insertion sequence-binding protein 2-like (Secisbp2l) from Mus musculus (Mouse).